Reading from the N-terminus, the 296-residue chain is Acetylglutamate kinase (296 aa).

Substrate is bound by residues 67–68, Arg89, and Asn194; that span reads GG.

It belongs to the acetylglutamate kinase family. ArgB subfamily.

The protein localises to the cytoplasm. It carries out the reaction N-acetyl-L-glutamate + ATP = N-acetyl-L-glutamyl 5-phosphate + ADP. It participates in amino-acid biosynthesis; L-arginine biosynthesis; N(2)-acetyl-L-ornithine from L-glutamate: step 2/4. In terms of biological role, catalyzes the ATP-dependent phosphorylation of N-acetyl-L-glutamate. This Brucella canis (strain ATCC 23365 / NCTC 10854 / RM-666) protein is Acetylglutamate kinase.